The primary structure comprises 91 residues: HssA/B-like protein 52 (91 aa).

Disordered regions lie at residues 1 to 20 and 72 to 91; these read MTLFSSISSISNPMTSSKSS and GGCGGSNGSMGGGNGSCCGI.

Belongs to the hssA/B family.

This Dictyostelium discoideum (Social amoeba) protein is HssA/B-like protein 52 (hssl52).